The sequence spans 623 residues: Peptide transporter PTR2 (623 aa).

Disordered regions lie at residues methionine 1–aspartate 20 and aspartate 31–glutamate 58. The next 11 helical transmembrane spans lie at alanine 134–glycine 154, alanine 163–isoleucine 183, asparagine 191–methionine 211, isoleucine 250–tyrosine 270, phenylalanine 277–isoleucine 297, isoleucine 385–methionine 405, phenylalanine 418–leucine 438, isoleucine 448–leucine 468, leucine 499–tyrosine 519, leucine 529–threonine 549, and leucine 557–alanine 577.

Belongs to the major facilitator superfamily. Proton-dependent oligopeptide transporter (POT/PTR) (TC 2.A.17) family.

Its subcellular location is the membrane. Uptake of small peptides. The sequence is that of Peptide transporter PTR2 (PTR2) from Candida albicans (Yeast).